A 209-amino-acid chain; its full sequence is uncharacterized protein (209 aa).

The stretch at 41–76 forms a coiled coil; that stretch reads NVENLCLIRNKLKTDIENLLENKIDVENKLLVLRNQ.

This is an uncharacterized protein from Acanthamoeba polyphaga (Amoeba).